We begin with the raw amino-acid sequence, 335 residues long: Anthranilate phosphoribosyltransferase (335 aa).

5-phospho-alpha-D-ribose 1-diphosphate is bound by residues G80, 83–84, T88, 90–93, 108–116, and S120; these read GD, NIST, and KHGNRAVSS. Position 80 (G80) interacts with anthranilate. A Mg(2+)-binding site is contributed by S92. Residue N111 coordinates anthranilate. Anthranilate is bound at residue R166. Residues D225 and E226 each coordinate Mg(2+).

It belongs to the anthranilate phosphoribosyltransferase family. Homodimer. It depends on Mg(2+) as a cofactor.

The catalysed reaction is N-(5-phospho-beta-D-ribosyl)anthranilate + diphosphate = 5-phospho-alpha-D-ribose 1-diphosphate + anthranilate. The protein operates within amino-acid biosynthesis; L-tryptophan biosynthesis; L-tryptophan from chorismate: step 2/5. Functionally, catalyzes the transfer of the phosphoribosyl group of 5-phosphorylribose-1-pyrophosphate (PRPP) to anthranilate to yield N-(5'-phosphoribosyl)-anthranilate (PRA). The sequence is that of Anthranilate phosphoribosyltransferase from Clostridium kluyveri (strain NBRC 12016).